Reading from the N-terminus, the 276-residue chain is NADPH-dependent 7-cyano-7-deazaguanine reductase (276 aa).

Substrate is bound at residue isoleucine 83–serine 85. NADPH is bound at residue serine 85–lysine 86. The active-site Thioimide intermediate is cysteine 184. Aspartate 191 (proton donor) is an active-site residue. Histidine 223–glutamate 224 is a binding site for substrate. Arginine 252–glycine 253 provides a ligand contact to NADPH.

It belongs to the GTP cyclohydrolase I family. QueF type 2 subfamily. Homodimer.

Its subcellular location is the cytoplasm. The catalysed reaction is 7-aminomethyl-7-carbaguanine + 2 NADP(+) = 7-cyano-7-deazaguanine + 2 NADPH + 3 H(+). It participates in tRNA modification; tRNA-queuosine biosynthesis. Catalyzes the NADPH-dependent reduction of 7-cyano-7-deazaguanine (preQ0) to 7-aminomethyl-7-deazaguanine (preQ1). In Pseudomonas aeruginosa (strain ATCC 15692 / DSM 22644 / CIP 104116 / JCM 14847 / LMG 12228 / 1C / PRS 101 / PAO1), this protein is NADPH-dependent 7-cyano-7-deazaguanine reductase.